Here is a 294-residue protein sequence, read N- to C-terminus: UPF0761 membrane protein YPTB0027 (294 aa).

7 helical membrane-spanning segments follow: residues 44–64 (LLSL…FPMF), 67–87 (ISIK…GDII), 108–128 (GLIV…NIIW), 136–156 (LVFS…LVGA), 185–205 (VFPL…VPTV), 212–232 (ALIG…GFAM), and 246–266 (VLAV…IVLL).

Belongs to the UPF0761 family.

Its subcellular location is the cell inner membrane. This is UPF0761 membrane protein YPTB0027 from Yersinia pseudotuberculosis serotype I (strain IP32953).